Reading from the N-terminus, the 293-residue chain is Excinuclease cho (293 aa).

The region spanning 33-108 (ALPGVYIFHS…IKEQQPLFNK (76 aa)) is the GIY-YIG domain.

In terms of biological role, incises the DNA at the 3' side of a lesion during nucleotide excision repair. Incises the DNA farther away from the lesion than UvrC. Not able to incise the 5' site of a lesion. When a lesion remains because UvrC is not able to induce the 3' incision, Cho incises the DNA. Then UvrC makes the 5' incision. The combined action of Cho and UvrC broadens the substrate range of nucleotide excision repair. The protein is Excinuclease cho (cho) of Salmonella typhimurium (strain LT2 / SGSC1412 / ATCC 700720).